Here is a 923-residue protein sequence, read N- to C-terminus: MKFGKKLRFECVSEWHNKYISYGKLKKYLRYLYRSDLKQIGEAEEAHLLINGFPSLSDSQEQFKQLSNSSSPIFNDGSCLENSLDSSIGSNIIQEQSQHQQQAQQQPPQQAQQQPPQQAQQQAQQQAPQAQQQAQQQAQQPEQQQQQDLKESFNDITGYSIDQYEDTSNLDEKTPLISILDQSRPTTTTTTTTTTMNTSAGSGIFKNKKPKQIPTISIPVFSQSERERLFLSKIDEELRKINEFFSNKEKDIILHYNKLTEHCSLILKDRNPSPKVLKNIQKAFGELYKGLTMLENYVNLNYQGFEKILKKYDRLAPMNSSIKLDQMERIKLEKFHSSKSWRNMKEDVELLYCKIFKLDKISIAKKKLAPFSESQSADYHMLKLGFAIGLSIGILAFVIILFTNKSLNQHPDWTRFVSTIPIFRAVGIPILAVWLWGVNVYIWDNARVNYILIFGLDPRTSIDHRRIWKTASFLTAIWLTMFLLFCGTVTGNFALGDVPAQVYPLVLVIFFLSVVFFPFRFFHRKSRTLLFITLGNVIITPFGSTKFRALFLGDLLTSMVKTIFDFEYTACYFFTGDWMINDSTRCNQVNSIALPILSGLPLLWRFMQCILRYRETNNKIHLGNSTKYAVGFSVVLFSALNGNYQAYEPWSASRILWCVCFVLSTLYMYCWDVVVDWGFMWLGKPRPLLRHQLMYKRHMWSYYYVLFSNLILRFAWTLTITRIPFELPINSELFNTITASIELVRRFTWSIFRVENEHICNSIQYHAFDFSEAPWKNEVPKVESPKSLLPLSSSYPYRQDNFNNNNNNNNNNNNNNNNNNNNNNNNNNNNNNNNNNNNNNNNNNNNTNNNINNINNINNNNNNSPSGSNSSINNSFHLGSSSYSYDNQYSIWKKSSKQYYSTSLIDSIKKKFFNNNNSNNNKK.

An SPX domain is found at 1–326 (MKFGKKLRFE…PMNSSIKLDQ (326 aa)). 2 stretches are compositionally biased toward low complexity: residues 94 to 147 (QEQS…QQQQ) and 186 to 195 (TTTTTTTTTT). Disordered stretches follow at residues 94–150 (QEQS…QDLK) and 185–208 (PTTT…FKNK). 9 consecutive transmembrane segments (helical) span residues 382–402 (LKLG…IILF), 416–436 (FVST…VWLW), 471–491 (ASFL…TVTG), 499–519 (PAQV…FFPF), 529–551 (LLFI…RALF), 591–611 (SIAL…QCIL), 620–640 (IHLG…FSAL), 655–675 (ILWC…DVVV), and 700–720 (WSYY…TLTI). The 201-residue stretch at 585–785 (RCNQVNSIAL…KNEVPKVESP (201 aa)) folds into the EXS domain. A disordered region spans residues 793–871 (SSYPYRQDNF…NNSPSGSNSS (79 aa)).

The protein belongs to the SYG1 (TC 2.A.94) family.

The protein resides in the membrane. The sequence is that of SPX and EXS domain-containing protein 1 from Dictyostelium discoideum (Social amoeba).